Reading from the N-terminus, the 130-residue chain is Large ribosomal subunit protein bL12 (130 aa).

It belongs to the bacterial ribosomal protein bL12 family. Homodimer. Part of the ribosomal stalk of the 50S ribosomal subunit. Forms a multimeric L10(L12)X complex, where L10 forms an elongated spine to which 2 to 4 L12 dimers bind in a sequential fashion. Binds GTP-bound translation factors.

Forms part of the ribosomal stalk which helps the ribosome interact with GTP-bound translation factors. Is thus essential for accurate translation. This chain is Large ribosomal subunit protein bL12, found in Chlamydia muridarum (strain MoPn / Nigg).